The following is a 130-amino-acid chain: Small ribosomal subunit protein uS9 (130 aa).

This sequence belongs to the universal ribosomal protein uS9 family.

This Oceanobacillus iheyensis (strain DSM 14371 / CIP 107618 / JCM 11309 / KCTC 3954 / HTE831) protein is Small ribosomal subunit protein uS9.